A 520-amino-acid chain; its full sequence is Cobyric acid synthase (520 aa).

One can recognise a GATase cobBQ-type domain in the interval 275–453; that stretch reads VLRVAVIRLP…WHGVLENDAF (179 aa). Cys-356 serves as the catalytic Nucleophile. The active site involves His-445.

Belongs to the CobB/CobQ family. CobQ subfamily.

Its pathway is cofactor biosynthesis; adenosylcobalamin biosynthesis. Its function is as follows. Catalyzes amidations at positions B, D, E, and G on adenosylcobyrinic A,C-diamide. NH(2) groups are provided by glutamine, and one molecule of ATP is hydrogenolyzed for each amidation. The protein is Cobyric acid synthase of Frankia casuarinae (strain DSM 45818 / CECT 9043 / HFP020203 / CcI3).